A 917-amino-acid polypeptide reads, in one-letter code: von Willebrand factor A domain-containing protein DDB_G0285975 (917 aa).

Positions 12-51 are disordered; it reads DTTTTTTPTTPTTPTTPTTTPTTTTTPTTTPTTTTTSTTP. The span at 13–51 shows a compositional bias: low complexity; that stretch reads TTTTTTPTTPTTPTTPTTTPTTTTTPTTTPTTTTTSTTP. Residues 87 to 215 enclose the VIT domain; that stretch reads RYNTGLKNIS…NVTIHLTIIS (129 aa). The VWFA domain maps to 339–507; it reads EFIFLIDCSG…NFEEQVMKLV (169 aa). In terms of domain architecture, t-SNARE coiled-coil homology spans 679 to 741; it reads LFSSENRNQT…INSIPQKSNI (63 aa). Low complexity-rich tracts occupy residues 751-760 and 774-818; these read SPSEVSTSKS and NNNN…NNNN. The interval 751–822 is disordered; the sequence is SPSEVSTSKS…NNNNNNSDNS (72 aa).

In Dictyostelium discoideum (Social amoeba), this protein is von Willebrand factor A domain-containing protein DDB_G0285975.